Consider the following 139-residue polypeptide: Small ribosomal subunit protein bS6 (139 aa).

This sequence belongs to the bacterial ribosomal protein bS6 family.

Functionally, binds together with bS18 to 16S ribosomal RNA. This is Small ribosomal subunit protein bS6 from Borreliella afzelii (strain PKo) (Borrelia afzelii).